The primary structure comprises 263 residues: Methylesterase 18 (263 aa).

Ser80 serves as the catalytic Acyl-ester intermediate. Residues Asp212 and His240 each act as charge relay system in the active site.

Belongs to the AB hydrolase superfamily. Methylesterase family.

It carries out the reaction methyl (indol-3-yl)acetate + H2O = (indol-3-yl)acetate + methanol + H(+). Its pathway is plant hormone biosynthesis. Its function is as follows. Methylesterase shown to have methyl indole-3-acetic acid (MeIAA) esterase activity in vitro. This chain is Methylesterase 18, found in Arabidopsis thaliana (Mouse-ear cress).